The sequence spans 163 residues: Probable chemoreceptor glutamine deamidase CheD (163 aa).

This sequence belongs to the CheD family.

It carries out the reaction L-glutaminyl-[protein] + H2O = L-glutamyl-[protein] + NH4(+). Functionally, probably deamidates glutamine residues to glutamate on methyl-accepting chemotaxis receptors (MCPs), playing an important role in chemotaxis. The polypeptide is Probable chemoreceptor glutamine deamidase CheD (Borreliella afzelii (strain PKo) (Borrelia afzelii)).